The sequence spans 200 residues: Large ribosomal subunit protein uL4 (200 aa).

Positions G38–G80 are disordered.

The protein belongs to the universal ribosomal protein uL4 family. In terms of assembly, part of the 50S ribosomal subunit.

In terms of biological role, one of the primary rRNA binding proteins, this protein initially binds near the 5'-end of the 23S rRNA. It is important during the early stages of 50S assembly. It makes multiple contacts with different domains of the 23S rRNA in the assembled 50S subunit and ribosome. Its function is as follows. Forms part of the polypeptide exit tunnel. This is Large ribosomal subunit protein uL4 from Stutzerimonas stutzeri (strain A1501) (Pseudomonas stutzeri).